Consider the following 235-residue polypeptide: MNANIRLLKYIVGVSSALFLIFSLISLFETIQNEKLYERDICFDSQCLKFFAEKTSGIVMYFQAFGWLITTFVTVFGVMIALMTYNAGVKNNNNSNYTSHLTMFREFASAELTKRSSIYPEKVNFFRWYRVMFPEAQGGDISVSRDYLEIISRIKCVIEEANAHITEENKDYKYKTHQRKMMAVLDEIGISISNGPKNIFIEVESQILDYIDTINLSFCHSSSVIELSRVKRKYI.

Transmembrane regions (helical) follow at residues 11-31 (IVGV…FETI) and 64-84 (AFGW…ALMT).

The protein resides in the cell inner membrane. Membrane component of antiviral defense system Retron Ec48, composed of a non-coding RNA (ncRNA), a reverse transcriptase (RT) and this membrane protein. Expression of this retron confers protection against bacteriophages lambda, T2, T4, T5 and T7. At multiplicity of infection (MOI) of 0.02 cultures grow normally when infected with lambda without collapsing, at MOI 2 cultures enter growth stasis. At MOI 3 cell membranes are permeabilized within 15 minutes of infection but do not lyse, suggesting the phage are not able to finish a replication cycle. Antiviral defense is suppressed by mutations that knockout the lambda gam expression or phage T7 gp5.9 expression; both viral genes inhibit host RecBCD. The Ec48 retron may sense the integrity of the RecBCD enzyme; when RecBCD is perturbed by viral proteins the Ec48 effector (the membrane protein) is activated, leading to abortive infection and bacterial growth arrest. This Escherichia coli protein is Retron Ec48 transmembrane protein.